The following is a 592-amino-acid chain: Arginine--tRNA ligase (592 aa).

The 'HIGH' region signature appears at 134-144 (ANPTGPLHVGH).

This sequence belongs to the class-I aminoacyl-tRNA synthetase family. In terms of assembly, monomer.

The protein resides in the cytoplasm. The catalysed reaction is tRNA(Arg) + L-arginine + ATP = L-arginyl-tRNA(Arg) + AMP + diphosphate. In Coxiella burnetii (strain CbuG_Q212) (Coxiella burnetii (strain Q212)), this protein is Arginine--tRNA ligase.